The sequence spans 275 residues: Beta-lactamase OXA-3 (275 aa).

The signal sequence occupies residues 1-21 (MAIRIFAILFSTFVFGTFAHA). Ser72 functions as the Acyl-ester intermediate in the catalytic mechanism. Lys75 bears the N6-carboxylysine mark. Residue 210–212 (KTG) participates in substrate binding.

It belongs to the class-D beta-lactamase family.

It catalyses the reaction a beta-lactam + H2O = a substituted beta-amino acid. In terms of biological role, this is an oxacillin-hydrolyzing beta-lactamase. The chain is Beta-lactamase OXA-3 (bla) from Pseudomonas aeruginosa.